We begin with the raw amino-acid sequence, 534 residues long: Cytochrome P450 monooxygenase ascG (534 aa).

A helical transmembrane segment spans residues 13–33 (FVASFPALSAAAGLIVAISFI). N-linked (GlcNAc...) asparagine glycosylation occurs at Asn-466. Cys-469 lines the heme pocket.

This sequence belongs to the cytochrome P450 family. Requires heme as cofactor.

It is found in the membrane. It catalyses the reaction ilicicolin C + NADPH + O2 + H(+) = ascochlorin + NADP(+) + 2 H2O. It participates in secondary metabolite biosynthesis; terpenoid biosynthesis. Functionally, cytochrome P450 monooxygenase; part of the asc-1 gene cluster that mediates the biosynthesis of both ascochlorin and ascofuranone, a strong inhibitor of cyanide-insensitive alternative oxidases and a promising drug candidate against African trypanosomiasis. The first step in the pathway is performed by the non-reducing polyketide synthase ascC that produces orsellinic acid by condensing acetyl-CoA with 3 malonyl-CoA units. Orsellinic acid is then prenylated by the prenyltransferase ascA to yield ilicicolinic acid B. Ilicicolinic acid B is further reduced to ilicicolin B by the reductase ascB. The halogenase ascD then chlorinates ilicicolin B to produce ilicicolin A which is converted to ilicicolin A epoxide by the cytochrome P450 monooxygenase ascE that catalyzes stereoselective epoxidation of the terminal double bond of the prenyl group. Ilicicolin A epoxide is the last common precursor for the biosynthesis of ascofuranone and ascochlorin. The terpene cyclase ascF produces a monocyclic terpene, and the cyclization reaction is proposed to be initiated by protonation of the terminal epoxide of ilicicolin A epoxide to generate a monocyclic tertiarycation, which is followed by a series of hydride and methyl shifts with abstraction of proton, leading to the formation of the (14S,15R,19R)-trimethylcyclohexanone ring structure of ilicicolin C, which is finally reduced to ascochlorin by the dehydrogenase ascG. On the other hand, ilicicolin A epoxide is hydroxylated by the cytochrome P450 monooxygenase ascH, and the resultant product is cyclized by the terpene cyclase ascI to ascofuranol via protonation-initiated epoxide ring opening, which facilitates the 6-endo-tet cyclization to form the tetrahy-drofuran ring. Finally, ascofuranol is oxidized into ascofuranone by ascJ. This is Cytochrome P450 monooxygenase ascG from Acremonium egyptiacum (Oospora egyptiaca).